We begin with the raw amino-acid sequence, 227 residues long: Ubiquitin domain-containing protein 1 (227 aa).

Residues 1-35 (MGNCVGRQRRERPAAPGHPRKRAGRNEPLKKERLK) form a disordered region. Basic and acidic residues predominate over residues 24-35 (GRNEPLKKERLK). One can recognise a Ubiquitin-like domain in the interval 149-224 (FPLKVRLSTG…IQVIINQPPP (76 aa)).

As to quaternary structure, interacts with UBTD1.

Functionally, may be involved in the regulation of cellular senescence through a positive feedback loop with TP53. Is a TP53 downstream target gene that increases the stability of TP53 protein by promoting the ubiquitination and degradation of MDM2. The chain is Ubiquitin domain-containing protein 1 (UBTD1) from Homo sapiens (Human).